A 307-amino-acid chain; its full sequence is Putative F-box protein PP2-B6 (307 aa).

The F-box domain occupies 42-88 (HSPFDDLPEDCISNIISFTSPRDVCVSASVSKSFAHAVQCDSIWEKF).

This is Putative F-box protein PP2-B6 (PP2B6) from Arabidopsis thaliana (Mouse-ear cress).